Consider the following 1342-residue polypeptide: DNA-directed RNA polymerase subunit beta (1342 aa).

Belongs to the RNA polymerase beta chain family. As to quaternary structure, the RNAP catalytic core consists of 2 alpha, 1 beta, 1 beta' and 1 omega subunit. When a sigma factor is associated with the core the holoenzyme is formed, which can initiate transcription.

The enzyme catalyses RNA(n) + a ribonucleoside 5'-triphosphate = RNA(n+1) + diphosphate. Its function is as follows. DNA-dependent RNA polymerase catalyzes the transcription of DNA into RNA using the four ribonucleoside triphosphates as substrates. The polypeptide is DNA-directed RNA polymerase subunit beta (Citrobacter koseri (strain ATCC BAA-895 / CDC 4225-83 / SGSC4696)).